A 237-amino-acid polypeptide reads, in one-letter code: Ubiquinone biosynthesis O-methyltransferase (237 aa).

S-adenosyl-L-methionine-binding residues include arginine 38, glycine 57, aspartate 78, and methionine 122.

It belongs to the methyltransferase superfamily. UbiG/COQ3 family.

The catalysed reaction is a 3-demethylubiquinol + S-adenosyl-L-methionine = a ubiquinol + S-adenosyl-L-homocysteine + H(+). It carries out the reaction a 3-(all-trans-polyprenyl)benzene-1,2-diol + S-adenosyl-L-methionine = a 2-methoxy-6-(all-trans-polyprenyl)phenol + S-adenosyl-L-homocysteine + H(+). It functions in the pathway cofactor biosynthesis; ubiquinone biosynthesis. Functionally, O-methyltransferase that catalyzes the 2 O-methylation steps in the ubiquinone biosynthetic pathway. The protein is Ubiquinone biosynthesis O-methyltransferase of Methylococcus capsulatus (strain ATCC 33009 / NCIMB 11132 / Bath).